The primary structure comprises 204 residues: Outer-membrane lipoprotein carrier protein (204 aa).

The first 21 residues, 1-21 (MKKIAIVGALLTSFVASSVWA), serve as a signal peptide directing secretion. The tract at residues 169-204 (QRSSYQLKSQQNGAIDASKFTFTPPQGVTVDDQRNK) is disordered. Residues 171-181 (SSYQLKSQQNG) show a composition bias toward polar residues.

It belongs to the LolA family. Monomer.

Its subcellular location is the periplasm. In terms of biological role, participates in the translocation of lipoproteins from the inner membrane to the outer membrane. Only forms a complex with a lipoprotein if the residue after the N-terminal Cys is not an aspartate (The Asp acts as a targeting signal to indicate that the lipoprotein should stay in the inner membrane). In Enterobacter sp. (strain 638), this protein is Outer-membrane lipoprotein carrier protein.